We begin with the raw amino-acid sequence, 511 residues long: MSVAILTSLPPQWLSILAVFLLPILTLLLFRGKDDNQKKGLKLPPGPRQLPLIGNLHQLGGQPYVDFWKMAKKYGPVMYLQLGRCPTVVLSSTETSKELMKDRDVECCSRPLSVGPGQLSYNFLDVAFSPYSDYWREMRKLFIFELLSMRRVQTFWYAREEQMDKMIEILDGAYPNPVNLTEKVFNMMDGIIGTIAFGRTTYAQQEFRDGFVKVLAATMDMLDNFHAENFFPVVGRFIDSLTGALAKRQRTFTDVDRYFEKVIEQHLDPNRPKPETEDIVDVLIGLMKDESTSFKITKDHVKAILMNVFVGGIDTSAVTITWAFSELLKNPKLMKKAQEEVRRAVGPNKRRVEGKEVEKIKYIDCIVKETFRKHPPVPLLVPHFSMKHCKIGGYDILPGTTIYVNAWAMGKDPTIWENPEEYNPDRFMNSEVDFRGSDFELVPFGAGRRICPGLAMGTTAVKYILSNLLYGWDYEMPRGKKFEDFPLIEEGGLTVHNKQDIMVIPKKHKWD.

Helical transmembrane passes span 10 to 30 (PPQW…LLLF) and 304 to 324 (ILMN…TWAF). Heme is bound at residue Cys451.

The protein belongs to the cytochrome P450 family. The cofactor is heme. Expressed in storage roots, primary roots, petioles and vascular tissues. Expressed in the outer cortex cells, the endodermis and around the xylem, phloem cells and laticifers.

Its subcellular location is the microsome membrane. It carries out the reaction (1E,2S)-2-methylbutanal oxime + reduced [NADPH--hemoprotein reductase] + O2 = 2-hydroxy-2-methylbutanenitrile + oxidized [NADPH--hemoprotein reductase] + 2 H2O + H(+). It catalyses the reaction (E)-2-methylpropanal oxime + reduced [NADPH--hemoprotein reductase] + O2 = 2-hydroxy-2-methylpropanenitrile + oxidized [NADPH--hemoprotein reductase] + 2 H2O + H(+). Functionally, catalyzes the conversion of (E)-2-methylpropanal oxime (valox) to 2-hydroxy-2-methylpropanenitrile (acetone cyanohydrin) and of (E)-2-methylbutanal oxime (ilox) to 2-hydroxy-2-methylbutyronitrile. The reaction takes place in three steps. First, the oxime is isomerized to the (Z)- isomer, next the (Z)-isomer is dehydrated to the corresponding nitrile, followed by a C-hydroxylation of the nitrile. Can use both aliphatic and aromatic oximes as substrates. The polypeptide is 2-methylbutanal oxime monooxygenase (CYP71E7) (Manihot esculenta (Cassava)).